Consider the following 996-residue polypeptide: UPF0182 protein CE0802 (996 aa).

7 helical membrane-spanning segments follow: residues 19 to 39 (VTWI…TVGF), 63 to 83 (IILF…AGYF), 115 to 135 (ILII…QRSW), 176 to 196 (STLL…LGGI), 212 to 234 (GARA…TYWL), 262 to 282 (KIIL…AIFL), and 290 to 310 (LAVV…PLML). The tract at residues 920-950 (VPDVNATEDADATTDGEDETPAAPAAPAGSE) is disordered. Residues 925 to 939 (ATEDADATTDGEDET) are compositionally biased toward acidic residues. Over residues 940–950 (PAAPAAPAGSE) the composition is skewed to low complexity.

Belongs to the UPF0182 family.

It localises to the cell membrane. The sequence is that of UPF0182 protein CE0802 from Corynebacterium efficiens (strain DSM 44549 / YS-314 / AJ 12310 / JCM 11189 / NBRC 100395).